We begin with the raw amino-acid sequence, 294 residues long: 4-hydroxy-tetrahydrodipicolinate synthase (294 aa).

Thr-47 lines the pyruvate pocket. Tyr-135 serves as the catalytic Proton donor/acceptor. Residue Lys-163 is the Schiff-base intermediate with substrate of the active site. Val-205 contributes to the pyruvate binding site.

This sequence belongs to the DapA family. As to quaternary structure, homotetramer; dimer of dimers.

It is found in the cytoplasm. The catalysed reaction is L-aspartate 4-semialdehyde + pyruvate = (2S,4S)-4-hydroxy-2,3,4,5-tetrahydrodipicolinate + H2O + H(+). Its pathway is amino-acid biosynthesis; L-lysine biosynthesis via DAP pathway; (S)-tetrahydrodipicolinate from L-aspartate: step 3/4. Functionally, catalyzes the condensation of (S)-aspartate-beta-semialdehyde [(S)-ASA] and pyruvate to 4-hydroxy-tetrahydrodipicolinate (HTPA). This is 4-hydroxy-tetrahydrodipicolinate synthase from Rickettsia canadensis (strain McKiel).